A 43-amino-acid chain; its full sequence is Potassium channel toxin gamma-KTx 4.9 (43 aa).

Cystine bridges form between Cys5–Cys23, Cys11–Cys34, Cys20–Cys39, and Cys24–Cys41.

Belongs to the ergtoxin family. Gamma-KTx 4 subfamily. Expressed by the venom gland.

The protein resides in the secreted. Its function is as follows. Reversibly blocks Kv11/ERG potassium channels. This is Potassium channel toxin gamma-KTx 4.9 from Centruroides sculpturatus (Arizona bark scorpion).